The following is a 344-amino-acid chain: Chalcone synthase A (344 aa).

The active site involves C167.

This sequence belongs to the thiolase-like superfamily. Chalcone/stilbene synthases family.

It catalyses the reaction (E)-4-coumaroyl-CoA + 3 malonyl-CoA + 3 H(+) = 2',4,4',6'-tetrahydroxychalcone + 3 CO2 + 4 CoA. The protein operates within secondary metabolite biosynthesis; flavonoid biosynthesis. In terms of biological role, the primary product of this enzyme is 4,2',4',6'-tetrahydroxychalcone (also termed naringenin-chalcone or chalcone) which can under specific conditions spontaneously isomerize into naringenin. In Ipomoea nil (Japanese morning glory), this protein is Chalcone synthase A (CHSA).